A 176-amino-acid chain; its full sequence is MKASGTLREYKVVGRLLPSVKNPTPPLYRMRIFAPNHVVAKSRFWYFVSQLRKMKKANGETVYCGLVHEKTPLKVKNFGVWLRNDSRSGTHNMYREYRDLTTSAAVTQCYRDMGARHRARAHSIHIMKVQEIAANKCRRPAIKQFHDSKIKFPLPHRVLRRQHNPRFTTKRPNTFF.

Belongs to the eukaryotic ribosomal protein eL20 family. In terms of assembly, component of the large ribosomal subunit.

The protein resides in the cytoplasm. Functionally, component of the large ribosomal subunit. The ribosome is a large ribonucleoprotein complex responsible for the synthesis of proteins in the cell. The sequence is that of Large ribosomal subunit protein eL20 (rpl18a) from Salmo salar (Atlantic salmon).